A 279-amino-acid polypeptide reads, in one-letter code: MLRVIGLGAVGSLFTYFLNRAGVVPEVVQRRRCGEFLFCVEGDCEKLKFREGGAADDVGYTIVAVKAYDSRSVVPHLKGVAVVAQNGIGGYEEIKEAYPNSVPAVVTYGVYREGCRAELRGVGEIYLPSAVSTLAELLERGGGRVRLVEDIEPYRWLKLAVNAAINAITALLQAPNGVIISSPYAQTLALEVAQEVLNVATALGVKMPRNPVEEVLRVASATAKNLSSTARDVAACAKTEIDYINGAVVKYGEALGVATPVNKALFNLIKARESLCNSG.

Residues 6–11 (GLGAVG), Lys66, and Asn86 contribute to the NADP(+) site. Residue Lys158 is the Proton donor of the active site. Residues Lys158, Asn162, Asn166, Asn176, and 225–228 (NLSS) each bind substrate. Glu240 is a binding site for NADP(+).

This sequence belongs to the ketopantoate reductase family.

Its subcellular location is the cytoplasm. It carries out the reaction (R)-pantoate + NAD(+) = 2-dehydropantoate + NADH + H(+). The enzyme catalyses (R)-pantoate + NADP(+) = 2-dehydropantoate + NADPH + H(+). It participates in cofactor biosynthesis; coenzyme A biosynthesis. In terms of biological role, catalyzes the NAD(P)H-dependent reduction of ketopantoate into pantoic acid. The polypeptide is 2-dehydropantoate 2-reductase (Pyrobaculum aerophilum (strain ATCC 51768 / DSM 7523 / JCM 9630 / CIP 104966 / NBRC 100827 / IM2)).